Here is a 398-residue protein sequence, read N- to C-terminus: 4-hydroxy-3-methylbut-2-en-1-yl diphosphate synthase (ferredoxin) (398 aa).

[4Fe-4S] cluster is bound by residues C306, C309, C340, and E347.

It belongs to the IspG family. It depends on [4Fe-4S] cluster as a cofactor.

The catalysed reaction is (2E)-4-hydroxy-3-methylbut-2-enyl diphosphate + 2 oxidized [2Fe-2S]-[ferredoxin] + H2O = 2-C-methyl-D-erythritol 2,4-cyclic diphosphate + 2 reduced [2Fe-2S]-[ferredoxin] + H(+). Its pathway is isoprenoid biosynthesis; isopentenyl diphosphate biosynthesis via DXP pathway; isopentenyl diphosphate from 1-deoxy-D-xylulose 5-phosphate: step 5/6. Functionally, converts 2C-methyl-D-erythritol 2,4-cyclodiphosphate (ME-2,4cPP) into 1-hydroxy-2-methyl-2-(E)-butenyl 4-diphosphate. In Parasynechococcus marenigrum (strain WH8102), this protein is 4-hydroxy-3-methylbut-2-en-1-yl diphosphate synthase (ferredoxin).